We begin with the raw amino-acid sequence, 195 residues long: NADH-quinone oxidoreductase subunit C (195 aa).

It belongs to the complex I 30 kDa subunit family. As to quaternary structure, NDH-1 is composed of 14 different subunits. Subunits NuoB, C, D, E, F, and G constitute the peripheral sector of the complex.

The protein resides in the cell inner membrane. The enzyme catalyses a quinone + NADH + 5 H(+)(in) = a quinol + NAD(+) + 4 H(+)(out). Its function is as follows. NDH-1 shuttles electrons from NADH, via FMN and iron-sulfur (Fe-S) centers, to quinones in the respiratory chain. The immediate electron acceptor for the enzyme in this species is believed to be ubiquinone. Couples the redox reaction to proton translocation (for every two electrons transferred, four hydrogen ions are translocated across the cytoplasmic membrane), and thus conserves the redox energy in a proton gradient. The chain is NADH-quinone oxidoreductase subunit C from Laribacter hongkongensis (strain HLHK9).